The sequence spans 515 residues: Bifunctional NAD(P)H-hydrate repair enzyme Nnr (515 aa).

An NAD(P)H-hydrate epimerase region spans residues 1–227; sequence MTDHTMKKNP…GLDSWLAGQE (227 aa). In terms of domain architecture, YjeF N-terminal spans 23–225; it reads IRRGEREAAD…SLGLDSWLAG (203 aa). The interval 71-75 is NADPHX 1; for epimerase activity; the sequence is NNGGD. Residues asparagine 72 and aspartate 135 each coordinate K(+). The NADPHX 1; for epimerase activity stretch occupies residues 139-145; that stretch reads GTGLRQA. Aspartate 168 lines the (6S)-NADPHX pocket. Serine 171 provides a ligand contact to K(+). Residues 234 to 501 form the YjeF C-terminal domain; the sequence is SAEQLSHWLK…STLQRIVNPE (268 aa). The interval 235–515 is ADP-dependent (S)-NAD(P)H-hydrate dehydratase; that stretch reads AEQLSHWLKP…NHDESSNSAP (281 aa). Glycine 329 provides a ligand contact to (6S)-NADPHX. An NADPHX 2; for dehydratase activity region spans residues 375–381; that stretch reads HPGEAAR. ADP-binding positions include 412 to 416 and 432 to 441; these read KGAGT and NAGMASGGMG. Residue aspartate 442 participates in (6S)-NADPHX binding.

This sequence in the N-terminal section; belongs to the NnrE/AIBP family. It in the C-terminal section; belongs to the NnrD/CARKD family. Requires K(+) as cofactor.

The catalysed reaction is (6S)-NADHX + ADP = AMP + phosphate + NADH + H(+). It catalyses the reaction (6S)-NADPHX + ADP = AMP + phosphate + NADPH + H(+). It carries out the reaction (6R)-NADHX = (6S)-NADHX. The enzyme catalyses (6R)-NADPHX = (6S)-NADPHX. Functionally, bifunctional enzyme that catalyzes the epimerization of the S- and R-forms of NAD(P)HX and the dehydration of the S-form of NAD(P)HX at the expense of ADP, which is converted to AMP. This allows the repair of both epimers of NAD(P)HX, a damaged form of NAD(P)H that is a result of enzymatic or heat-dependent hydration. The polypeptide is Bifunctional NAD(P)H-hydrate repair enzyme Nnr (nnr) (Escherichia coli (strain K12)).